The chain runs to 131 residues: Fumarate reductase subunit C (131 aa).

3 helical membrane-spanning segments follow: residues 30 to 50 (EGTAVPAVWFSIELIFGLFAL), 57 to 77 (WMGFVGFLQNPVVVILNLITL), and 109 to 129 (IIKGLWVVTAVVTVVILYVAL).

The protein belongs to the FrdC family. In terms of assembly, part of an enzyme complex containing four subunits: a flavoprotein (FrdA), an iron-sulfur protein (FrdB), and two hydrophobic anchor proteins (FrdC and FrdD).

It is found in the cell inner membrane. In terms of biological role, two distinct, membrane-bound, FAD-containing enzymes are responsible for the catalysis of fumarate and succinate interconversion; fumarate reductase is used in anaerobic growth, and succinate dehydrogenase is used in aerobic growth. Anchors the catalytic components of the fumarate reductase complex to the cell inner membrane, binds quinones. This chain is Fumarate reductase subunit C, found in Salmonella choleraesuis (strain SC-B67).